The primary structure comprises 597 residues: MAEGSAVSDPQHAARLLRALSSFREESRFCDAHLVLDGEEIPVQKNILAAASPYIRTKLNYNPPKDDGSTYKIELEGISVMVMREILDYIFSGQIRLNEDTIQDVVQAADLLLLTDLKTLCCEFLEGCIAAENCIGIRDFALHYCLHHVHYLATEYLETHFRDVSSTEEFLELSPQKLKEVISLEKLNVGNERYVFEAVIRWIAHDTEIRKVHMKDVMSALWVSGLDSSYLREQMLNEPLVREIVKECSNIPLSQPQQGEAMLANFKPRGYSECIVTVGGEERVSRKPTAAMRCMCPLYDPNRQLWIELAPLSMPRINHGVLSAEGFLFVFGGQDENKQTLSSGEKYDPDANTWTALPPMNEARHNFGIVEIDGMLYILGGEDGEKELISMECYDIYSKTWTKQPDLTMVRKIGCYAAMKKKIYAMGGGSYGKLFESVECYDPRTQQWTAICPLKERRFGAVACGVAMELYVFGGVRSREDAQGSEMVTCKSEFYHDEFKRWIYLNDQNLCIPASSSFVYGAVPIGASIYVIGDLDTGTNYDYVREFKRSTGTWHHTKPLLPSDLRRTGCAALRIANCKLFRLQLQQGLFRIRVHSP.

The region spanning 30-99 (CDAHLVLDGE…IFSGQIRLNE (70 aa)) is the BTB domain. Residues 134-236 (CIGIRDFALH…DSSYLREQML (103 aa)) enclose the BACK domain. Kelch repeat units follow at residues 274-326 (CIVT…SAEG), 327-374 (FLFV…EIDG), 376-421 (LYIL…AMKK), 422-468 (KIYA…GVAM), 470-522 (LYVF…VYGA), and 528-574 (SIYV…AALR).

As to quaternary structure, interacts with TBCB. Interacts with CUL3. Part of a complex that contains CUL3, RBX1 and GAN. Interacts (via BTB domain) with UBA1. Interacts (via Kelch domains) with MAP1B (via C-terminus) and MAP1S (via C-terminus). Ubiquitinated by E3 ubiquitin ligase complex formed by CUL3 and RBX1 and probably targeted for proteasome-independent degradation. As to expression, expressed in brain, heart and muscle.

The protein resides in the cytoplasm. It localises to the cytoskeleton. Its pathway is protein modification; protein ubiquitination. In terms of biological role, probable cytoskeletal component that directly or indirectly plays an important role in neurofilament architecture. May act as a substrate-specific adapter of an E3 ubiquitin-protein ligase complex which mediates the ubiquitination and subsequent proteasomal degradation of target proteins. Controls degradation of TBCB. Controls degradation of MAP1B and MAP1S, and is critical for neuronal maintenance and survival. The sequence is that of Gigaxonin (GAN) from Homo sapiens (Human).